We begin with the raw amino-acid sequence, 157 residues long: Small ribosomal subunit protein uS7 (157 aa).

The protein belongs to the universal ribosomal protein uS7 family. Part of the 30S ribosomal subunit. Contacts proteins S9 and S11.

One of the primary rRNA binding proteins, it binds directly to 16S rRNA where it nucleates assembly of the head domain of the 30S subunit. Is located at the subunit interface close to the decoding center, probably blocks exit of the E-site tRNA. The polypeptide is Small ribosomal subunit protein uS7 (Francisella tularensis subsp. holarctica (strain OSU18)).